Reading from the N-terminus, the 511-residue chain is ATP synthase subunit alpha 1 (511 aa).

ATP is bound at residue Gly-170–Thr-177.

The protein belongs to the ATPase alpha/beta chains family. In terms of assembly, F-type ATPases have 2 components, CF(1) - the catalytic core - and CF(0) - the membrane proton channel. CF(1) has five subunits: alpha(3), beta(3), gamma(1), delta(1), epsilon(1). CF(0) has three main subunits: a(1), b(2) and c(9-12). The alpha and beta chains form an alternating ring which encloses part of the gamma chain. CF(1) is attached to CF(0) by a central stalk formed by the gamma and epsilon chains, while a peripheral stalk is formed by the delta and b chains.

It is found in the cell inner membrane. It carries out the reaction ATP + H2O + 4 H(+)(in) = ADP + phosphate + 5 H(+)(out). Its function is as follows. Produces ATP from ADP in the presence of a proton gradient across the membrane. The alpha chain is a regulatory subunit. The chain is ATP synthase subunit alpha 1 from Gluconobacter oxydans (strain 621H) (Gluconobacter suboxydans).